Consider the following 293-residue polypeptide: Transcription elongation factor S-II (293 aa).

The 78-residue stretch at 4-81 (ADIRSAKAAL…KKWKADVSKG (78 aa)) folds into the TFIIS N-terminal domain. The disordered stretch occupies residues 81–123 (GRPLKTTTTTSSTPSKHADVGSQAQKQVQKQSSSGQRTFKSDN). A compositionally biased stretch (low complexity) spans 100-116 (VGSQAQKQVQKQSSSGQ). The 116-residue stretch at 133–248 (IRNNCIGLMY…HAQGAKPQKA (116 aa)) folds into the TFIIS central domain. The segment at 251–291 (DLFTCGKCKQKKVSYYQMQTRSADEPMTTFCECTVCGNRWK) adopts a TFIIS-type zinc-finger fold. Zn(2+) is bound by residues Cys255, Cys258, Cys283, and Cys286.

It belongs to the TFS-II family.

The protein resides in the nucleus. Its function is as follows. Necessary for efficient RNA polymerase II transcription elongation past template-encoded arresting sites. The arresting sites in DNA have the property of trapping a certain fraction of elongating RNA polymerases that pass through, resulting in locked ternary complexes. Cleavage of the nascent transcript by S-II allows the resumption of elongation from the new 3'-terminus. This chain is Transcription elongation factor S-II (tfs1), found in Schizosaccharomyces pombe (strain 972 / ATCC 24843) (Fission yeast).